Consider the following 363-residue polypeptide: Ribosomal RNA large subunit methyltransferase M (363 aa).

S-adenosyl-L-methionine-binding positions include Ser190, 223–226 (CPGG), Asp242, Asp262, and Asp280. Lys309 (proton acceptor) is an active-site residue.

The protein belongs to the class I-like SAM-binding methyltransferase superfamily. RNA methyltransferase RlmE family. RlmM subfamily. As to quaternary structure, monomer.

The protein resides in the cytoplasm. The catalysed reaction is cytidine(2498) in 23S rRNA + S-adenosyl-L-methionine = 2'-O-methylcytidine(2498) in 23S rRNA + S-adenosyl-L-homocysteine + H(+). Catalyzes the 2'-O-methylation at nucleotide C2498 in 23S rRNA. This Actinobacillus pleuropneumoniae serotype 5b (strain L20) protein is Ribosomal RNA large subunit methyltransferase M.